A 553-amino-acid polypeptide reads, in one-letter code: Phenylalanine--tRNA ligase beta subunit (553 aa).

Residues 273-349 enclose the B5 domain; that stretch reads FNVRNIDIEV…RAFGYNNITP (77 aa). Positions 327, 333, 336, and 337 each coordinate Mg(2+).

This sequence belongs to the phenylalanyl-tRNA synthetase beta subunit family. Type 2 subfamily. As to quaternary structure, tetramer of two alpha and two beta subunits. Mg(2+) serves as cofactor.

Its subcellular location is the cytoplasm. The catalysed reaction is tRNA(Phe) + L-phenylalanine + ATP = L-phenylalanyl-tRNA(Phe) + AMP + diphosphate + H(+). This is Phenylalanine--tRNA ligase beta subunit from Methanocella arvoryzae (strain DSM 22066 / NBRC 105507 / MRE50).